Reading from the N-terminus, the 291-residue chain is Gamma-sarcoglycan (291 aa).

Over 1–37 (MVREQYTTVTEGTHIERPENQHIYKIGIYGWRKRCLY) the chain is Cytoplasmic. A helical; Signal-anchor for type II membrane protein membrane pass occupies residues 38-58 (LFVLLLLAILVVNLALTIWIL). The Extracellular portion of the chain corresponds to 59–291 (KVMWFSPIGM…TCEEHSHVCL (233 aa)). Residue Asn-110 is glycosylated (N-linked (GlcNAc...) asparagine). 2 cysteine pairs are disulfide-bonded: Cys-265–Cys-290 and Cys-267–Cys-283.

This sequence belongs to the sarcoglycan beta/delta/gamma/zeta family. Interacts with the syntrophin SNTA1 and FLNC. Cross-link to form 2 major subcomplexes: one consisting of SGCB, SGCD and SGCG and the other consisting of SGCB and SGCD. The association between SGCB and SGCG is particularly strong while SGCA is loosely associated with the other sarcoglycans. Most strongly expressed in skeletal and heart muscle. Also detected in proliferating myoblasts.

The protein localises to the cell membrane. The protein resides in the sarcolemma. It is found in the cytoplasm. Its subcellular location is the cytoskeleton. Component of the sarcoglycan complex, a subcomplex of the dystrophin-glycoprotein complex which forms a link between the F-actin cytoskeleton and the extracellular matrix. This is Gamma-sarcoglycan (Sgcg) from Mus musculus (Mouse).